The sequence spans 114 residues: T cell receptor beta variable 9 (114 aa).

The N-terminal stretch at 1–21 is a signal peptide; sequence MGFRLLCCVAFCLLGAGPVDS. Residues 22–114 enclose the Ig-like domain; that stretch reads GVTQTPKHLI…SALYFCASSV (93 aa). C42 and C110 are disulfide-bonded. Residue N96 is glycosylated (N-linked (GlcNAc...) asparagine).

As to quaternary structure, alpha-beta TR is a heterodimer composed of an alpha and beta chain; disulfide-linked. The alpha-beta TR is associated with the transmembrane signaling CD3 coreceptor proteins to form the TR-CD3 (TcR or TCR). The assembly of alpha-beta TR heterodimers with CD3 occurs in the endoplasmic reticulum where a single alpha-beta TR heterodimer associates with one CD3D-CD3E heterodimer, one CD3G-CD3E heterodimer and one CD247 homodimer forming a stable octameric structure. CD3D-CD3E and CD3G-CD3E heterodimers preferentially associate with TR alpha and TR beta chains, respectively. The association of the CD247 homodimer is the last step of TcR assembly in the endoplasmic reticulum and is required for transport to the cell surface.

It is found in the cell membrane. In terms of biological role, v region of the variable domain of T cell receptor (TR) beta chain that participates in the antigen recognition. Alpha-beta T cell receptors are antigen specific receptors which are essential to the immune response and are present on the cell surface of T lymphocytes. Recognize peptide-major histocompatibility (MH) (pMH) complexes that are displayed by antigen presenting cells (APC), a prerequisite for efficient T cell adaptive immunity against pathogens. Binding of alpha-beta TR to pMH complex initiates TR-CD3 clustering on the cell surface and intracellular activation of LCK that phosphorylates the ITAM motifs of CD3G, CD3D, CD3E and CD247 enabling the recruitment of ZAP70. In turn ZAP70 phosphorylates LAT, which recruits numerous signaling molecules to form the LAT signalosome. The LAT signalosome propagates signal branching to three major signaling pathways, the calcium, the mitogen-activated protein kinase (MAPK) kinase and the nuclear factor NF-kappa-B (NF-kB) pathways, leading to the mobilization of transcription factors that are critical for gene expression and essential for T cell growth and differentiation. The T cell repertoire is generated in the thymus, by V-(D)-J rearrangement. This repertoire is then shaped by intrathymic selection events to generate a peripheral T cell pool of self-MH restricted, non-autoaggressive T cells. Post-thymic interaction of alpha-beta TR with the pMH complexes shapes TR structural and functional avidity. In Homo sapiens (Human), this protein is T cell receptor beta variable 9.